The following is a 76-amino-acid chain: Protein TraJ (76 aa).

Its subcellular location is the cytoplasm. Its function is as follows. This protein is essential for positively regulating the expression of transfer genes that are involved in the conjugal transfer of DNA between bacterial cells. The protein is Protein TraJ (traJ) of Escherichia coli.